We begin with the raw amino-acid sequence, 309 residues long: NAD kinase (309 aa).

The active-site Proton acceptor is Asp89. NAD(+) contacts are provided by residues 89–90, 163–164, His174, Arg191, Asp193, and 204–209; these read DG, NE, and TAYALS.

Belongs to the NAD kinase family. It depends on a divalent metal cation as a cofactor.

The protein localises to the cytoplasm. The catalysed reaction is NAD(+) + ATP = ADP + NADP(+) + H(+). Functionally, involved in the regulation of the intracellular balance of NAD and NADP, and is a key enzyme in the biosynthesis of NADP. Catalyzes specifically the phosphorylation on 2'-hydroxyl of the adenosine moiety of NAD to yield NADP. The polypeptide is NAD kinase (Shewanella sp. (strain ANA-3)).